A 423-amino-acid polypeptide reads, in one-letter code: Sporulation-regulated protein 28 (423 aa).

The Septin-type G domain maps to 28-342 (KGLQLSILLL…ENYRAKVLTE (315 aa)). Residues 38-45 (GEKGSGKS) form a G1 motif region. GTP is bound by residues 38–45 (GEKGSGKS), Gly124, 204–212 (KADGLTETE), and Arg291. A G3 motif region spans residues 121–124 (LFPG). The segment at 203 to 206 (PKAD) is G4 motif. The span at 360-381 (RGSVSNVSTRRNSASRTLGNPD) shows a compositional bias: polar residues. Residues 360–385 (RGSVSNVSTRRNSASRTLGNPDTNDE) form a disordered region. Residues 384–417 (DENAYQIHKEIDEKNRIIEDYQRKIDLLEKMLAA) adopt a coiled-coil conformation.

This sequence belongs to the TRAFAC class TrmE-Era-EngA-EngB-Septin-like GTPase superfamily. Septin GTPase family. Interacts with itself. Interacts with CDC11 and SPR3; probably to form a ring at the bud neck.

The protein resides in the membrane. Its subcellular location is the bud neck. In terms of biological role, septins are GTPases involved in cytokinesis that assemble into filaments and form a ring at the cleavage site. May act by recruiting MYO1 and HOF1, a protein involved in septation, to the site of cleavage. Septins are also involved in cell morphogenesis, bud site selection, chitin deposition, cell cycle regulation, cell compartmentalization and spore wall formation. The polypeptide is Sporulation-regulated protein 28 (SPR28) (Saccharomyces cerevisiae (strain ATCC 204508 / S288c) (Baker's yeast)).